Here is a 178-residue protein sequence, read N- to C-terminus: MTVSDHPQTVSQPDPESESRPSKTRLKQEMHALQALGERLVELEPARIAELDLPEKLAEALLEARKITSHGARRRHLQFIGKLMRAVDPLPVQEKLDAWQHTGMRHTAWLHQLERWRDRLISDETAVTEFVQTYPHTDVRQLRTLLRNIEKEKLAGKPPHNFRALFQLLRQIIPEIPG.

Over residues 1-14 (MTVSDHPQTVSQPD) the composition is skewed to polar residues. The tract at residues 1–25 (MTVSDHPQTVSQPDPESESRPSKTR) is disordered.

Belongs to the DarP family.

It is found in the cytoplasm. Its function is as follows. Member of a network of 50S ribosomal subunit biogenesis factors which assembles along the 30S-50S interface, preventing incorrect 23S rRNA structures from forming. Promotes peptidyl transferase center (PTC) maturation. This chain is Dual-action ribosomal maturation protein DarP, found in Nitrosomonas europaea (strain ATCC 19718 / CIP 103999 / KCTC 2705 / NBRC 14298).